The chain runs to 430 residues: Phosphoglucosamine mutase (430 aa).

Ser93 serves as the catalytic Phosphoserine intermediate. Residues Ser93, Asp227, Asp229, and Asp231 each contribute to the Mg(2+) site. A Phosphoserine modification is found at Ser93.

This sequence belongs to the phosphohexose mutase family. It depends on Mg(2+) as a cofactor. Activated by phosphorylation.

The enzyme catalyses alpha-D-glucosamine 1-phosphate = D-glucosamine 6-phosphate. In terms of biological role, catalyzes the conversion of glucosamine-6-phosphate to glucosamine-1-phosphate. The sequence is that of Phosphoglucosamine mutase from Thermosipho africanus (strain TCF52B).